The primary structure comprises 456 residues: Cobyrinate a,c-diamide synthase (456 aa).

The GATase cobBQ-type domain occupies 247-439; it reads PIAIARDRAF…LHLHFGGKPW (193 aa). Cys-330 (nucleophile) is an active-site residue.

This sequence belongs to the CobB/CbiA family. It depends on Mg(2+) as a cofactor.

The catalysed reaction is cob(II)yrinate + 2 L-glutamine + 2 ATP + 2 H2O = cob(II)yrinate a,c diamide + 2 L-glutamate + 2 ADP + 2 phosphate + 2 H(+). It participates in cofactor biosynthesis; adenosylcobalamin biosynthesis; cob(II)yrinate a,c-diamide from sirohydrochlorin (anaerobic route): step 10/10. Its function is as follows. Catalyzes the ATP-dependent amidation of the two carboxylate groups at positions a and c of cobyrinate, using either L-glutamine or ammonia as the nitrogen source. This chain is Cobyrinate a,c-diamide synthase, found in Synechococcus sp. (strain ATCC 27144 / PCC 6301 / SAUG 1402/1) (Anacystis nidulans).